The following is a 37-amino-acid chain: Delta-amaurobitoxin-Pl1b (37 aa).

Disulfide bonds link Cys2-Cys18, Cys9-Cys23, Cys17-Cys33, and Cys25-Cys31. Ser37 is subject to Serine amide.

Belongs to the neurotoxin 07 (Beta/delta-agtx) family. 02 (aga-3) subfamily. Expressed by the venom gland.

The protein localises to the secreted. Its function is as follows. Insecticidal toxin. Binds to site 4 of insect voltage-gated sodium channel (Nav) and inhibits channel inactivation. In vivo, it lethal to lepidopteran larvae. Has no adverse affects when intracerebroventricularly injected in mice at a dose of 0.2 ug, but causes reversible paralysis of legs when injected intracerebroventricularly in mice at a dose of 2.0 ug. The chain is Delta-amaurobitoxin-Pl1b from Pireneitega luctuosa (Tangled nest spider).